We begin with the raw amino-acid sequence, 196 residues long: Imidazoleglycerol-phosphate dehydratase (196 aa).

It belongs to the imidazoleglycerol-phosphate dehydratase family.

It is found in the cytoplasm. It carries out the reaction D-erythro-1-(imidazol-4-yl)glycerol 3-phosphate = 3-(imidazol-4-yl)-2-oxopropyl phosphate + H2O. It functions in the pathway amino-acid biosynthesis; L-histidine biosynthesis; L-histidine from 5-phospho-alpha-D-ribose 1-diphosphate: step 6/9. This chain is Imidazoleglycerol-phosphate dehydratase, found in Clostridium novyi (strain NT).